Consider the following 142-residue polypeptide: Hemoglobin subunit alpha-A (142 aa).

One can recognise a Globin domain in the interval 2–142 (VLSAADKTNV…VGTVLTAKYR (141 aa)). Residue His59 participates in O2 binding. Position 88 (His88) interacts with heme b.

Belongs to the globin family. In terms of assembly, heterotetramer of two alpha chains and two beta chains. In terms of tissue distribution, red blood cells.

Involved in oxygen transport from the lung to the various peripheral tissues. The chain is Hemoglobin subunit alpha-A (HBAA) from Coturnix japonica (Japanese quail).